The primary structure comprises 262 residues: Transmembrane protein 106A (262 aa).

Residues 95 to 115 traverse the membrane as a helical segment; that stretch reads FVFLAVLICLVTSSFIVFFLF.

Belongs to the TMEM106 family. In terms of tissue distribution, expressed in renal cells (at protein level). Expressed in epithelial cells.

The protein resides in the cell membrane. Its function is as follows. Activates macrophages and polarizes them into M1-like macrophages through the activation of the MAPK and NF-kappaB signaling pathway. Upon activation, up-regulates the expression of CD80, CD86, CD69 and MHC II on macrophages, and induces the release of pro-inflammatory cytokines such as TNF, IL1B, IL6, CCL2 and nitric oxide. May play a role in inhibition of proliferation and migration. This chain is Transmembrane protein 106A (TMEM106A), found in Homo sapiens (Human).